The following is a 241-amino-acid chain: Uracil-DNA glycosylase (241 aa).

Residue Asp-71 is the Proton acceptor of the active site.

It belongs to the uracil-DNA glycosylase (UDG) superfamily. UNG family.

The protein resides in the cytoplasm. It carries out the reaction Hydrolyzes single-stranded DNA or mismatched double-stranded DNA and polynucleotides, releasing free uracil.. Functionally, excises uracil residues from the DNA which can arise as a result of misincorporation of dUMP residues by DNA polymerase or due to deamination of cytosine. The sequence is that of Uracil-DNA glycosylase from Xanthomonas campestris pv. campestris (strain 8004).